A 188-amino-acid chain; its full sequence is uncharacterized protein (188 aa).

The segment at 133-153 (PKGRPTMKLQYPKMPPKPKTR) is disordered.

It belongs to the IS150/IS1296 orfA family.

This is an uncharacterized protein from Haemophilus influenzae (strain ATCC 51907 / DSM 11121 / KW20 / Rd).